The primary structure comprises 169 residues: N-alpha-acetyltransferase 50 (169 aa).

In terms of domain architecture, N-acetyltransferase spans 6–155; the sequence is IELGDVTPHN…DAHVLQKNLK (150 aa). Threonine 12 carries the phosphothreonine modification. A substrate-binding site is contributed by tyrosine 31. N6-acetyllysine occurs at positions 34 and 37. The active site involves tyrosine 73. Position 75 (methionine 75) interacts with substrate. 77-90 is an acetyl-CoA binding site; that stretch reads LGCLAPYRRLGIGT. Tyrosine 110 carries the post-translational modification Phosphotyrosine. Histidine 112 is a catalytic residue. 117 to 126 provides a ligand contact to CoA; the sequence is NESAIDFYRK. Positions 138–141 are substrate; that stretch reads YYKR. Position 140 is an N6-acetyllysine (lysine 140).

The protein belongs to the acetyltransferase family. GNAT subfamily. In terms of assembly, component of the N-terminal acetyltransferase E (NatE) complex at least composed of NAA10, NAA15 and NAA50. Interacts with NAA10. Interacts with NAA15. Predominantly interacts with NAA15 in the N-terminal acetyltransferase A complex (NatA complex); the interactions reduce the acetylation activity of the NatA complex. Component of the N-terminal acetyltransferase E (NatE)/HYPK complex at least composed of NAA10, NAA15, NAA50 and HYPK. Within the complex interacts with NAA15. Its capacity to interact with the NatA complex is reduced by HYPK. Interacts with NAA35.

The protein localises to the cytoplasm. It is found in the nucleus. The catalysed reaction is N-terminal L-methionyl-L-alanyl-[protein] + acetyl-CoA = N-terminal N(alpha)-acetyl-L-methionyl-L-alanyl-[protein] + CoA + H(+). It catalyses the reaction N-terminal L-methionyl-L-seryl-[protein] + acetyl-CoA = N-terminal N(alpha)-acetyl-L-methionyl-L-seryl-[protein] + CoA + H(+). The enzyme catalyses N-terminal L-methionyl-L-valyl-[protein] + acetyl-CoA = N-terminal N(alpha)-acetyl-L-methionyl-L-valyl-[protein] + CoA + H(+). It carries out the reaction N-terminal L-methionyl-L-threonyl-[protein] + acetyl-CoA = N-terminal N(alpha)-acetyl-L-methionyl-L-threonyl-[protein] + CoA + H(+). The catalysed reaction is N-terminal L-methionyl-L-lysyl-[protein] + acetyl-CoA = N-terminal N(alpha)-acetyl-L-methionyl-L-lysyl-[protein] + CoA + H(+). It catalyses the reaction N-terminal L-methionyl-L-leucyl-[protein] + acetyl-CoA = N-terminal N(alpha)-acetyl-L-methionyl-L-leucyl-[protein] + CoA + H(+). The enzyme catalyses N-terminal L-methionyl-L-phenylalanyl-[protein] + acetyl-CoA = N-terminal N(alpha)-acetyl-L-methionyl-L-phenylalanyl-[protein] + CoA + H(+). It carries out the reaction N-terminal L-methionyl-L-tyrosyl-[protein] + acetyl-CoA = N-terminal N(alpha)-acetyl-L-methionyl-L-tyrosyl-[protein] + CoA + H(+). N-alpha-acetyltransferase that acetylates the N-terminus of proteins that retain their initiating methionine. Has a broad substrate specificity: able to acetylate the initiator methionine of most peptides, except for those with a proline in second position. Also displays N-epsilon-acetyltransferase activity by mediating acetylation of the side chain of specific lysines on proteins. Autoacetylates in vivo. The relevance of N-epsilon-acetyltransferase activity is however unclear: able to acetylate H4 in vitro, but this result has not been confirmed in vivo. Component of N-alpha-acetyltransferase complexes containing NAA10 and NAA15, which has N-alpha-acetyltransferase activity. Does not influence the acetyltransferase activity of NAA10. However, it negatively regulates the N-alpha-acetyltransferase activity of the N-terminal acetyltransferase A complex (also called the NatA complex). The multiprotein complexes probably constitute the major contributor for N-terminal acetylation at the ribosome exit tunnel, with NAA10 acetylating all amino termini that are devoid of methionine and NAA50 acetylating other peptides. Required for sister chromatid cohesion during mitosis by promoting binding of CDCA5/sororin to cohesin: may act by counteracting the function of NAA10. This is N-alpha-acetyltransferase 50 from Mus musculus (Mouse).